The primary structure comprises 545 residues: Phenylalanine--tRNA ligase beta subunit (545 aa).

One can recognise a B5 domain in the interval 268–343 (FLHKIQNVRE…MSIGYNNLEP (76 aa)). The Mg(2+) site is built by Asp321, Asp327, Glu330, and Asp331.

It belongs to the phenylalanyl-tRNA synthetase beta subunit family. Type 2 subfamily. As to quaternary structure, tetramer of two alpha and two beta subunits. The cofactor is Mg(2+).

It localises to the cytoplasm. It catalyses the reaction tRNA(Phe) + L-phenylalanine + ATP = L-phenylalanyl-tRNA(Phe) + AMP + diphosphate + H(+). The protein is Phenylalanine--tRNA ligase beta subunit of Saccharolobus islandicus (strain Y.N.15.51 / Yellowstone #2) (Sulfolobus islandicus).